Reading from the N-terminus, the 488-residue chain is UDP-N-acetylmuramoyl-L-alanyl-D-glutamate--2,6-diaminopimelate ligase (488 aa).

Residues leucine 24, serine 26, and 41-43 each bind UDP-N-acetyl-alpha-D-muramoyl-L-alanyl-D-glutamate; that span reads HQV. An ATP-binding site is contributed by 113-119; that stretch reads GTNGKTT. Residues asparagine 154, 155 to 156, serine 182, glutamine 188, and arginine 190 contribute to the UDP-N-acetyl-alpha-D-muramoyl-L-alanyl-D-glutamate site; that span reads TT. Lysine 222 carries the N6-carboxylysine modification. Meso-2,6-diaminopimelate contacts are provided by residues arginine 386, 410 to 413, glycine 461, and glutamate 465; that span reads DNPR. The short motif at 410–413 is the Meso-diaminopimelate recognition motif element; it reads DNPR.

This sequence belongs to the MurCDEF family. MurE subfamily. Requires Mg(2+) as cofactor. Carboxylation is probably crucial for Mg(2+) binding and, consequently, for the gamma-phosphate positioning of ATP.

It is found in the cytoplasm. It carries out the reaction UDP-N-acetyl-alpha-D-muramoyl-L-alanyl-D-glutamate + meso-2,6-diaminopimelate + ATP = UDP-N-acetyl-alpha-D-muramoyl-L-alanyl-gamma-D-glutamyl-meso-2,6-diaminopimelate + ADP + phosphate + H(+). It functions in the pathway cell wall biogenesis; peptidoglycan biosynthesis. In terms of biological role, catalyzes the addition of meso-diaminopimelic acid to the nucleotide precursor UDP-N-acetylmuramoyl-L-alanyl-D-glutamate (UMAG) in the biosynthesis of bacterial cell-wall peptidoglycan. The sequence is that of UDP-N-acetylmuramoyl-L-alanyl-D-glutamate--2,6-diaminopimelate ligase from Haemophilus influenzae (strain ATCC 51907 / DSM 11121 / KW20 / Rd).